Here is a 588-residue protein sequence, read N- to C-terminus: Transcriptional regulatory protein ASH1 (588 aa).

Ser-56 bears the Phosphoserine mark. Disordered stretches follow at residues 85-109 (SNTAPASPHHMDYNPISSLTPGNSP), 377-398 (SNNSKSNVRKPSKNKISKQASN), and 417-495 (SSVS…TRHT). Residues 99–109 (PISSLTPGNSP) show a composition bias toward polar residues. Residues 383–392 (NVRKPSKNKI) show a composition bias toward basic residues. Low complexity predominate over residues 417-433 (SSVSASSSPSPSTPTKS). Ser-465 carries the post-translational modification Phosphoserine. Residues 470–493 (PRRSSNSSITKKGSRRSSGSSPTR) are compositionally biased toward low complexity. Residues 499-526 (CVSCHSSDSPCWRPSWSPRKQDQLCNSC) form a GATA-type; atypical zinc finger.

Component of the RPD3C(L) complex composed of at least ASH1, CTI6, DEP1, PHO23, RPD3, RXT2, RXT3, SAP30, SDS3, SIN3, UME1 and UME6.

The protein resides in the nucleus. Its function is as follows. Component of the RPD3C(L) histone deacetylase complex (HDAC). Responsible for the deacetylation of lysine residues on the N-terminal part of the core histones (H2A, H2B, H3 and H4). Histone deacetylation gives a tag for epigenetic repression and plays an important role in transcriptional regulation, cell cycle progression and developmental events. ASH1 is necessary to repress HO in daughter cells to block mating-type switching through its binding to HO promoter 5'-YTGAT-3' sites. Also involved in pseudohyphal growth. The sequence is that of Transcriptional regulatory protein ASH1 (ASH1) from Saccharomyces cerevisiae (strain ATCC 204508 / S288c) (Baker's yeast).